We begin with the raw amino-acid sequence, 219 residues long: Elongation factor Ts (219 aa).

The segment at 82–85 (TDFV) is involved in Mg(2+) ion dislocation from EF-Tu.

Belongs to the EF-Ts family.

The protein localises to the cytoplasm. Functionally, associates with the EF-Tu.GDP complex and induces the exchange of GDP to GTP. It remains bound to the aminoacyl-tRNA.EF-Tu.GTP complex up to the GTP hydrolysis stage on the ribosome. The sequence is that of Elongation factor Ts from Gloeobacter violaceus (strain ATCC 29082 / PCC 7421).